The chain runs to 226 residues: Cytidylate kinase (226 aa).

12–20 (GPSGAGKGT) provides a ligand contact to ATP.

Belongs to the cytidylate kinase family. Type 1 subfamily.

It localises to the cytoplasm. It carries out the reaction CMP + ATP = CDP + ADP. The catalysed reaction is dCMP + ATP = dCDP + ADP. This chain is Cytidylate kinase, found in Vibrio vulnificus (strain CMCP6).